We begin with the raw amino-acid sequence, 1187 residues long: AT-rich interactive domain-containing protein 5B (1187 aa).

Residue Lys130 forms a Glycyl lysine isopeptide (Lys-Gly) (interchain with G-Cter in SUMO2) linkage. Residues 251–279 (RPRKKKPCPQRRDSFSGVKDSNNNSDGKA) form a disordered region. The residue at position 264 (Ser264) is a Phosphoserine. The region spanning 319–411 (RADEQAFLVA…LILPYERFIK (93 aa)) is the ARID domain. Residue Lys337 is modified to N6,N6-dimethyllysine. Positions 413-611 (EEDKPLPPIK…QPPLASQSEL (199 aa)) are disordered. Residue Lys446 forms a Glycyl lysine isopeptide (Lys-Gly) (interchain with G-Cter in SUMO2) linkage. Residues 447–459 (HEIPKSKKEKENA) are compositionally biased toward basic and acidic residues. Residues 460–469 (PKPQESPEVS) are compositionally biased toward low complexity. Glycyl lysine isopeptide (Lys-Gly) (interchain with G-Cter in SUMO2) cross-links involve residues Lys494 and Lys496. The segment covering 512–522 (ADPEKDSDADR) has biased composition (basic and acidic residues). A compositionally biased stretch (low complexity) spans 527 to 537 (ATAAEEAGEQG). Glycyl lysine isopeptide (Lys-Gly) (interchain with G-Cter in SUMO2) cross-links involve residues Lys767, Lys774, Lys803, Lys810, Lys893, Lys916, Lys920, Lys935, Lys988, Lys1000, and Lys1013. The tract at residues 891–977 (DKKPAPAEAP…YPEPLSRASR (87 aa)) is disordered. Ser1032 is modified (phosphoserine). The interval 1032–1065 (SPLDPPKEACGKDKGAELEGEGGKAAAAHGGPAA) is disordered. Over residues 1036-1048 (PPKEACGKDKGAE) the composition is skewed to basic and acidic residues. Residues Lys1055 and Lys1069 each participate in a glycyl lysine isopeptide (Lys-Gly) (interchain with G-Cter in SUMO2) cross-link. Positions 1055-1065 (KAAAAHGGPAA) are enriched in low complexity. Phosphoserine is present on Ser1132.

This sequence belongs to the ARID5B family. Methylation at Lys-337 prevents DNA-binding. Demethylation by PHF2 promotes recruitment of the PHF2-ARID5B complex to promoters.

Its subcellular location is the nucleus. Its function is as follows. Transcription coactivator that binds to the 5'-AATA[CT]-3' core sequence and plays a key role in adipogenesis and liver development. Acts by forming a complex with phosphorylated PHF2, which mediates demethylation at Lys-337, leading to target the PHF2-ARID5B complex to target promoters, where PHF2 mediates demethylation of dimethylated 'Lys-9' of histone H3 (H3K9me2), followed by transcription activation of target genes. The PHF2-ARID5B complex acts as a coactivator of HNF4A in liver. Required for adipogenesis: regulates triglyceride metabolism in adipocytes by regulating expression of adipogenic genes. Overexpression leads to induction of smooth muscle marker genes, suggesting that it may also act as a regulator of smooth muscle cell differentiation and proliferation. The protein is AT-rich interactive domain-containing protein 5B (ARID5B) of Canis lupus familiaris (Dog).